Consider the following 887-residue polypeptide: MCAALRRNLLLRSLWVVLAIGTAQVQAASPRWEPQIAVLCEAGQIYQPQYLSEEGRWVTDLSKKTTGPTCLRDKMDLLDYCKKAYPNRDITNIVESSHYQKIGGWCRQGALNAAKCKGSHRWIKPFRCLGPFQSDALLVPEGCLFDHIHNASRCWPFVRWNQTGAAACQERGMQMRSFAMLLPCGISVFSGVEFVCCPKHFKTDEIHVKKTDLPVMPAAQINSANDELVMNDEDDSNDSNYSKDANEDDLDDEDDLMGDDEEDDMVADEAATAGGSPNTGSSGDSNSGSLDDINAEYDSGEEGDNYEEDGAGSESEAEVEASWDQSGGAKVVSLKSDSSSPSSAPVAPAPEKAPVKSESVTSTPQLSASAAAFVAANSGNSGTGAGAPPSTAQPTSDPYFTHFDPHYEHQSYKVSQKRLEESHREKVTRVMKDWSDLEEKYQDMRLADPKAAQSFKQRMTARFQTSVQALEEEGNAEKHQLAAMHQQRVLAHINQRKREAMTCYTQALTEQPPNAHHVEKCLQKLLRALHKDRAHALAHYRHLLNSGGPGGLEAAASERPRTLERLIDIDRAVNQSMTMLKRYPELSAKIAQLMNDYILALRSKDDIPGSSLGMSEEAEAGILDKYRVEIERKVAEKERLRLAEKQRKEQRAAEREKLREEKLRLEAKKVDDMLKSQVAEQQSQPTQSSTQSQAQQQQQEKSLPGKELGPDAALVTAANPNLETTKSEKDLSDTEYGEATVSSTKVQTVLPTVDDDAVQRAVEDVAAAVAHQEAEPQVQHFMTHDLGHRESSFSLRREFAQHAHAAKEGRNVYFTLSFAGIALMAAVFVGVAVAKWRTSRSPHAQGFIEVDQNVTTHHPIVREEKIVPNMQINGYENPTYKYFEVKE.

Residues 1 to 27 (MCAALRRNLLLRSLWVVLAIGTAQVQA) form the signal peptide. The Extracellular portion of the chain corresponds to 28 to 813 (ASPRWEPQIA…HAAKEGRNVY (786 aa)). Positions 30–133 (PRWEPQIAVL…KPFRCLGPFQ (104 aa)) are GFLD subdomain. The 170-residue stretch at 30-199 (PRWEPQIAVL…SGVEFVCCPK (170 aa)) folds into the E1 domain. Cystine bridges form between cysteine 40–cysteine 70, cysteine 81–cysteine 128, cysteine 106–cysteine 116, cysteine 143–cysteine 197, cysteine 154–cysteine 184, and cysteine 168–cysteine 196. A cuBD subdomain region spans residues 141-199 (EGCLFDHIHNASRCWPFVRWNQTGAAACQERGMQMRSFAMLLPCGISVFSGVEFVCCPK). N-linked (GlcNAc...) asparagine glycosylation is found at asparagine 150 and asparagine 161. 2 disordered regions span residues 225-365 (NDEL…STPQ) and 377-396 (NSGN…QPTS). N-linked (GlcNAc...) asparagine glycosylation is found at asparagine 237 and asparagine 240. The segment covering 246-267 (NEDDLDDEDDLMGDDEEDDMVA) has biased composition (acidic residues). Over residues 268–292 (DEAATAGGSPNTGSSGDSNSGSLDD) the composition is skewed to low complexity. Positions 293 to 321 (INAEYDSGEEGDNYEEDGAGSESEAEVEA) are enriched in acidic residues. Positions 329-352 (AKVVSLKSDSSSPSSAPVAPAPEK) are enriched in low complexity. One can recognise an E2 domain in the interval 395–597 (TSDPYFTHFD…AKIAQLMNDY (203 aa)). Asparagine 574 is a glycosylation site (N-linked (GlcNAc...) asparagine). The disordered stretch occupies residues 675–743 (KSQVAEQQSQ…TEYGEATVSS (69 aa)). A compositionally biased stretch (low complexity) spans 681 to 699 (QQSQPTQSSTQSQAQQQQQ). The helical transmembrane segment at 814–834 (FTLSFAGIALMAAVFVGVAVA) threads the bilayer. Residues 835-887 (KWRTSRSPHAQGFIEVDQNVTTHHPIVREEKIVPNMQINGYENPTYKYFEVKE) lie on the Cytoplasmic side of the membrane. The short motif at 875–880 (YENPTY) is the YENPXY motif element.

The protein belongs to the APP family. In terms of assembly, interacts (via the intracellular domain, ICD) with APP-BP1. As to expression, expressed in postmitotic neurons in the central and peripheral nervous systems. Within the nervous system, transcripts are not observed in neuroblasts, newly generated neurons and at least one class of presumed glial cells.

Its subcellular location is the membrane. During development, plays a role in the regulation of the neddylation pathway. Appl and APP-BP1 interact antagonistically during development. The polypeptide is Amyloid-beta-like protein (Appl) (Drosophila melanogaster (Fruit fly)).